We begin with the raw amino-acid sequence, 198 residues long: Glycerol-3-phosphate acyltransferase (198 aa).

5 helical membrane-spanning segments follow: residues 2–22 (FITYLLLIVAYLLGSIPFALV), 53–75 (AGFIVTIADILKGTLATGLPLIF), 79–98 (IHPLLFGLAAVLGHVYPIFA), 113–133 (LLCYAPIIFAILAVVFFTLLF), and 147–167 (IAAVIASIVNGDKIFIVAMCL).

This sequence belongs to the PlsY family. As to quaternary structure, probably interacts with PlsX.

The protein localises to the cell membrane. It carries out the reaction an acyl phosphate + sn-glycerol 3-phosphate = a 1-acyl-sn-glycero-3-phosphate + phosphate. The protein operates within lipid metabolism; phospholipid metabolism. Its function is as follows. Catalyzes the transfer of an acyl group from acyl-phosphate (acyl-PO(4)) to glycerol-3-phosphate (G3P) to form lysophosphatidic acid (LPA). This enzyme utilizes acyl-phosphate as fatty acyl donor, but not acyl-CoA or acyl-ACP. This chain is Glycerol-3-phosphate acyltransferase, found in Bacillus cytotoxicus (strain DSM 22905 / CIP 110041 / 391-98 / NVH 391-98).